The following is a 220-amino-acid chain: Putative amino-acid transporter YisU (220 aa).

6 consecutive transmembrane segments (helical) span residues 15–35 (FFSMNAIIHGIVLAFGLILPL), 67–87 (TLLIVLAVAGVSVIVQELPVF), 89–109 (TVMMAGGFLFLLYMGWVTWNI), 128–148 (AFAAAVSLLNPHAILDTIGVI), 161–181 (WLFMAACIAVSWIWFISLAIA), and 195–215 (MLIVNKCSAAVMWAAAGYFGV).

It belongs to the LysE/ArgO transporter (TC 2.A.75) family.

The protein localises to the cell membrane. This Bacillus subtilis (strain 168) protein is Putative amino-acid transporter YisU (yisU).